A 461-amino-acid chain; its full sequence is V-type ATP synthase beta chain 1 (461 aa).

It belongs to the ATPase alpha/beta chains family.

Functionally, produces ATP from ADP in the presence of a proton gradient across the membrane. The V-type beta chain is a regulatory subunit. The polypeptide is V-type ATP synthase beta chain 1 (Clostridium tetani (strain Massachusetts / E88)).